The primary structure comprises 68 residues: Large ribosomal subunit protein bL32 (68 aa).

The segment at 1-25 (MAVPQNKITKSRRGQRRSHDALVAG) is disordered.

The protein belongs to the bacterial ribosomal protein bL32 family.

This chain is Large ribosomal subunit protein bL32, found in Dinoroseobacter shibae (strain DSM 16493 / NCIMB 14021 / DFL 12).